Reading from the N-terminus, the 363-residue chain is Phosphoserine aminotransferase (363 aa).

Arg42 contacts L-glutamate. Residues 76 to 77 (AR), Trp104, Thr155, Asp175, and Gln198 contribute to the pyridoxal 5'-phosphate site. Lys199 bears the N6-(pyridoxal phosphate)lysine mark. Position 240-241 (240-241 (NT)) interacts with pyridoxal 5'-phosphate.

It belongs to the class-V pyridoxal-phosphate-dependent aminotransferase family. SerC subfamily. As to quaternary structure, homodimer. The cofactor is pyridoxal 5'-phosphate.

The protein localises to the cytoplasm. It catalyses the reaction O-phospho-L-serine + 2-oxoglutarate = 3-phosphooxypyruvate + L-glutamate. It carries out the reaction 4-(phosphooxy)-L-threonine + 2-oxoglutarate = (R)-3-hydroxy-2-oxo-4-phosphooxybutanoate + L-glutamate. It functions in the pathway amino-acid biosynthesis; L-serine biosynthesis; L-serine from 3-phospho-D-glycerate: step 2/3. It participates in cofactor biosynthesis; pyridoxine 5'-phosphate biosynthesis; pyridoxine 5'-phosphate from D-erythrose 4-phosphate: step 3/5. Functionally, catalyzes the reversible conversion of 3-phosphohydroxypyruvate to phosphoserine and of 3-hydroxy-2-oxo-4-phosphonooxybutanoate to phosphohydroxythreonine. The protein is Phosphoserine aminotransferase (serC) of Edwardsiella ictaluri (strain 93-146).